A 110-amino-acid chain; its full sequence is Thiosulfate sulfurtransferase GlpE (110 aa).

Residues 17-105 (RENGAQVVDI…WRSVYPADTS (89 aa)) enclose the Rhodanese domain. The Cysteine persulfide intermediate role is filled by cysteine 65.

This sequence belongs to the GlpE family.

The protein resides in the cytoplasm. The catalysed reaction is thiosulfate + hydrogen cyanide = thiocyanate + sulfite + 2 H(+). It carries out the reaction thiosulfate + [thioredoxin]-dithiol = [thioredoxin]-disulfide + hydrogen sulfide + sulfite + 2 H(+). Functionally, transferase that catalyzes the transfer of sulfur from thiosulfate to thiophilic acceptors such as cyanide or dithiols. May function in a CysM-independent thiosulfate assimilation pathway by catalyzing the conversion of thiosulfate to sulfite, which can then be used for L-cysteine biosynthesis. This is Thiosulfate sulfurtransferase GlpE from Pseudomonas aeruginosa (strain LESB58).